The sequence spans 125 residues: Small ribosomal subunit protein uS12c (125 aa).

It belongs to the universal ribosomal protein uS12 family. In terms of assembly, part of the 30S ribosomal subunit.

It is found in the plastid. Functionally, with S4 and S5 plays an important role in translational accuracy. Located at the interface of the 30S and 50S subunits. The sequence is that of Small ribosomal subunit protein uS12c (rps12) from Euglena longa (Euglenophycean alga).